The primary structure comprises 270 residues: MTSDRPLKLLISNDDGISALGVRTLANTLATAGHQVTVVCPDGERSATGHGLTLHHPIRAEQVEGIFHPDVIAWSCSGTPADSVKFALSAVLKERPDLVLAGINHGSNLGTDILYSGTVSAALEGLIEGIPSIAFSLASFKACDFQPAADFALTLVRKVALNPFPLPTLLNVNVPPVSSGEIKGVKITRQGLRHYEETFEKRLDPRGKSYYWLIGEVVEDIEQPDYTHLPPEVPTDVRAIGENFITITPLQYNLTDVQGFQHLHRNSWFD.

Residues Asp14, Asp15, Ser46, and Asn104 each contribute to the a divalent metal cation site.

This sequence belongs to the SurE nucleotidase family. The cofactor is a divalent metal cation.

It is found in the cytoplasm. It catalyses the reaction a ribonucleoside 5'-phosphate + H2O = a ribonucleoside + phosphate. Nucleotidase that shows phosphatase activity on nucleoside 5'-monophosphates. This is 5'-nucleotidase SurE from Microcystis aeruginosa (strain NIES-843 / IAM M-2473).